Consider the following 115-residue polypeptide: ER exit protein (115 aa).

It belongs to the STEEP1 family.

Functionally, may stimulate membrane curvature formation and subsequent endoplasmic reticulum exit site (ERES) establishment. This chain is ER exit protein, found in Schizosaccharomyces pombe (strain 972 / ATCC 24843) (Fission yeast).